The primary structure comprises 212 residues: Orotate phosphoribosyltransferase (212 aa).

Lys-26 serves as a coordination point for 5-phospho-alpha-D-ribose 1-diphosphate. An orotate-binding site is contributed by 34-35 (FF). 5-phospho-alpha-D-ribose 1-diphosphate contacts are provided by residues 72–73 (YK), Arg-98, Lys-99, Lys-102, His-104, and 123–131 (DDVISAGTS). The orotate site is built by Ser-127 and Arg-155.

Belongs to the purine/pyrimidine phosphoribosyltransferase family. PyrE subfamily. Homodimer. Requires Mg(2+) as cofactor.

The catalysed reaction is orotidine 5'-phosphate + diphosphate = orotate + 5-phospho-alpha-D-ribose 1-diphosphate. It participates in pyrimidine metabolism; UMP biosynthesis via de novo pathway; UMP from orotate: step 1/2. Its function is as follows. Catalyzes the transfer of a ribosyl phosphate group from 5-phosphoribose 1-diphosphate to orotate, leading to the formation of orotidine monophosphate (OMP). The sequence is that of Orotate phosphoribosyltransferase from Thiobacillus denitrificans (strain ATCC 25259 / T1).